The chain runs to 630 residues: GTPase-activating protein NEL1 (630 aa).

The protein belongs to the SEC23/SEC24 family. SEC23 subfamily.

The protein localises to the cytoplasm. Its subcellular location is the nucleus. In terms of biological role, acts as a GTPase-activating protein (GAP) for SAR1. Contrary to its SEC23 homolog, NEL1 does not associate with SEC24 and its homologs, nor does it associate with the COPII components, suggesting that it is unlikely that NEL1 functions as a structural component of the vesicle coat machinery. May function as a signaling molecule. This is GTPase-activating protein NEL1 from Saccharomyces cerevisiae (strain ATCC 204508 / S288c) (Baker's yeast).